Consider the following 164-residue polypeptide: CB1 cannabinoid receptor-interacting protein 1 (164 aa).

Belongs to the CNRIP family. As to quaternary structure, interacts with the cannabinoid receptor CNR1 (via C-terminus). Does not interact with cannabinoid receptor CNR2.

Suppresses cannabinoid receptor CNR1-mediated tonic inhibition of voltage-gated calcium channels. Functionally, does not suppress cannabinoid receptor CNR1-mediated tonic inhibition of voltage-gated calcium channels. The chain is CB1 cannabinoid receptor-interacting protein 1 (CNRIP1) from Homo sapiens (Human).